A 660-amino-acid polypeptide reads, in one-letter code: E3 ubiquitin-protein ligase ORTHRUS 3 (660 aa).

The PHD-type zinc-finger motif lies at 12 to 63; it reads EGVCMRCKSMPPPEESLTCGTCVTPWHVSCLLSPPETLSATLQWLCPDCSGE. The segment at 107–129 is disordered; the sequence is QLLSGKGVVDEDDEEEKKKTSKG. Residues 141 to 197 form an RING-type 1 zinc finger; the sequence is CSFCMQSLQKPVSVRVLFALALMLVWFLESTPCGHNACLKCFLKWMGQGHRSCGTCR. A YDG domain is found at 285 to 434; the sequence is VRNQGLLVGE…CRFLFVRCDN (150 aa). The RING-type 2 zinc-finger motif lies at 528–585; it reads CQICQKVMTNPVTTPCAHNFCKACLESKFAGTALVRERGSGGRKLRSQKSVMKCPCCP. Residues 593-622 are a coiled coil; sequence QNPQVNREVAEVIEKLKKQEEEENAKSLDE. 2 stretches are compositionally biased toward basic and acidic residues: residues 610 to 621 and 637 to 646; these read KQEEEENAKSLD and QPKKRIKLDT. The segment at 610 to 660 is disordered; that stretch reads KQEEEENAKSLDEGQCSGTSHEEEDDEQPKKRIKLDTDAEVSATVVESDMK.

It is found in the nucleus. It carries out the reaction S-ubiquitinyl-[E2 ubiquitin-conjugating enzyme]-L-cysteine + [acceptor protein]-L-lysine = [E2 ubiquitin-conjugating enzyme]-L-cysteine + N(6)-ubiquitinyl-[acceptor protein]-L-lysine.. It functions in the pathway protein modification; protein ubiquitination. E3 ubiquitin-protein ligase. May participate in CpG methylation-dependent transcriptional regulation. The sequence is that of E3 ubiquitin-protein ligase ORTHRUS 3 (ORTH3) from Arabidopsis thaliana (Mouse-ear cress).